The following is a 131-amino-acid chain: Small ribosomal subunit protein eS8 (131 aa).

Positions Asp-11 to Pro-36 are disordered. The span at Ser-16–Ala-30 shows a compositional bias: basic residues.

This sequence belongs to the eukaryotic ribosomal protein eS8 family. Part of the 30S ribosomal subunit.

This is Small ribosomal subunit protein eS8 from Pyrobaculum islandicum (strain DSM 4184 / JCM 9189 / GEO3).